The following is a 160-amino-acid chain: Ribosomal RNA large subunit methyltransferase H (160 aa).

S-adenosyl-L-methionine is bound by residues Leu-76, Gly-108, and 127–132 (LGKLTW).

Belongs to the RNA methyltransferase RlmH family. Homodimer.

It localises to the cytoplasm. The catalysed reaction is pseudouridine(1915) in 23S rRNA + S-adenosyl-L-methionine = N(3)-methylpseudouridine(1915) in 23S rRNA + S-adenosyl-L-homocysteine + H(+). Specifically methylates the pseudouridine at position 1915 (m3Psi1915) in 23S rRNA. This Agrobacterium fabrum (strain C58 / ATCC 33970) (Agrobacterium tumefaciens (strain C58)) protein is Ribosomal RNA large subunit methyltransferase H.